We begin with the raw amino-acid sequence, 157 residues long: 2-C-methyl-D-erythritol 2,4-cyclodiphosphate synthase (157 aa).

Residues Asp8 and His10 each contribute to the a divalent metal cation site. 4-CDP-2-C-methyl-D-erythritol 2-phosphate contacts are provided by residues 8 to 10 (DVH) and 34 to 35 (HS). His42 is a binding site for a divalent metal cation. Residues 56-58 (DIG), 61-65 (FPDTD), 100-106 (AQRPKMA), 132-135 (TTTE), Phe139, and Arg142 each bind 4-CDP-2-C-methyl-D-erythritol 2-phosphate.

This sequence belongs to the IspF family. Homotrimer. A divalent metal cation is required as a cofactor.

It carries out the reaction 4-CDP-2-C-methyl-D-erythritol 2-phosphate = 2-C-methyl-D-erythritol 2,4-cyclic diphosphate + CMP. It participates in isoprenoid biosynthesis; isopentenyl diphosphate biosynthesis via DXP pathway; isopentenyl diphosphate from 1-deoxy-D-xylulose 5-phosphate: step 4/6. Involved in the biosynthesis of isopentenyl diphosphate (IPP) and dimethylallyl diphosphate (DMAPP), two major building blocks of isoprenoid compounds. Catalyzes the conversion of 4-diphosphocytidyl-2-C-methyl-D-erythritol 2-phosphate (CDP-ME2P) to 2-C-methyl-D-erythritol 2,4-cyclodiphosphate (ME-CPP) with a corresponding release of cytidine 5-monophosphate (CMP). The polypeptide is 2-C-methyl-D-erythritol 2,4-cyclodiphosphate synthase (Geobacter sulfurreducens (strain ATCC 51573 / DSM 12127 / PCA)).